A 416-amino-acid chain; its full sequence is Neurotensin receptor type 2 (416 aa).

Over 1–32 (METSSPWPPRPSPSAGLSLEARLGVDTRLWAK) the chain is Extracellular. A helical transmembrane segment spans residues 33–55 (VLFTALYSLIFAFGTAGNALSVH). Residues 56–64 (VVLKARAGR) lie on the Cytoplasmic side of the membrane. The helical transmembrane segment at 65 to 87 (PGRLRYHVLSLALSALLLLLVSM) threads the bilayer. At 88 to 109 (PMELYNFVWSHYPWVFGDLGCR) the chain is on the extracellular side. A disulfide bridge links Cys-108 with Cys-194. A helical transmembrane segment spans residues 110-131 (GYYFVRELCAYATVLSVASLSA). The Cytoplasmic segment spans residues 132-154 (ERCLAVCQPLRARRLLTPRRTRR). A helical membrane pass occupies residues 155-176 (LLSLVWVASLGLALPMAVIMGQ). Over 177–216 (KHEVESADGEPEPASRVCTVLVSRATLQVFIQVNVLVSFA) the chain is Extracellular. A helical transmembrane segment spans residues 217-237 (LPLALTAFLNGITVNHLMALY). The Cytoplasmic portion of the chain corresponds to 238 to 297 (SQVPSASAQVSSIPSRLELLSEEGLLGFITWRKTLSLGVQASLVRHKDASQIRSLQHSAQ). The helical transmembrane segment at 298 to 318 (VLRAIVAVYVICWLPYHARRL) threads the bilayer. Over 319–337 (MYCYIPDDGWTNELYDFYH) the chain is Extracellular. The chain crosses the membrane as a helical span at residues 338–358 (YFYMVTNTLFYVSSAVTPILY). Residues 359 to 416 (NAVSSSFRKLFLESLGSLCGEQHSLVPLPQEAPESTTSTYSFRLWGSPRNPSLGEIQV) are Cytoplasmic-facing. A lipid anchor (S-palmitoyl cysteine) is attached at Cys-377. Ser-410 is modified (phosphoserine).

The protein belongs to the G-protein coupled receptor 1 family. Neurotensin receptor subfamily. NTSR2 sub-subfamily. Abundant in cortex and hypothalamus, and lower levels seen in the heart and intestine.

The protein resides in the cell membrane. Receptor for the tridecapeptide neurotensin. It is associated with G proteins that activate a phosphatidylinositol-calcium second messenger system. The chain is Neurotensin receptor type 2 (Ntsr2) from Rattus norvegicus (Rat).